A 416-amino-acid chain; its full sequence is Probable histone-binding protein lin-53 (416 aa).

6 WD repeats span residues 118 to 158 (NHEG…SVPK), 170 to 210 (GHTK…GANG), 220 to 260 (GHES…PGHA), 263 to 303 (AHSA…LKLH), 307 to 347 (SHRD…EDQT), and 364 to 404 (GHTA…YNDV).

The protein belongs to the WD repeat RBAP46/RBAP48/MSI1 family. As to quaternary structure, binds directly to helix 1 of the histone fold of histone H4, a region that is not accessible when H4 is in chromatin. Probable component of a NuRD-like complex, composed of at least lin-53 and hda-1. Interacts with lin-35. Interacts with hda-1; the interaction is direct. Component of the DRM complex, at least composed of lin-9, lin-35, lin-37, lin-52, lin-53, lin-54- dpl-1 and efl-1. Interacts with hcp-3.

The protein localises to the nucleus. Its subcellular location is the chromosome. It is found in the centromere. In terms of biological role, core histone-binding subunit that may target chromatin assembly factors, chromatin remodeling factors and histone deacetylases to their histone substrates in a manner that is regulated by nucleosomal DNA. Required for hcp-3 and his-1 stabilization, localization of hcp-3 to centromeres and for proper chromosome segregation. Synthetic multivulva class B (synMuvB) protein. SynMuvB proteins are required to repress the induction of vulval development by Ras signaling and probably act by forming the multiprotein DRM complex that represses transcription. The polypeptide is Probable histone-binding protein lin-53 (Caenorhabditis briggsae).